Reading from the N-terminus, the 483-residue chain is Proton-coupled amino acid transporter 2 (483 aa).

Topologically, residues M1 to Q58 are cytoplasmic. A compositionally biased stretch (basic and acidic residues) spans S26–T36. Residues S26–A46 are disordered. The chain crosses the membrane as a helical span at residues A59 to V79. Residues K80–N81 are Extracellular-facing. The chain crosses the membrane as a helical span at residues A82 to M102. The Cytoplasmic portion of the chain corresponds to H103 to H148. The helical transmembrane segment at I149–L169 threads the bilayer. Over A170–P197 the chain is Extracellular. A helical membrane pass occupies residues T198–I218. Residues R219–R222 are Cytoplasmic-facing. A helical transmembrane segment spans residues I223–I243. Residues Q244–T264 are Extracellular-facing. The chain crosses the membrane as a helical span at residues Y265–L285. The Cytoplasmic portion of the chain corresponds to E286–P296. Residues A297–G317 traverse the membrane as a helical segment. At Y318–G349 the chain is on the extracellular side. Residues I350–I370 form a helical membrane-spanning segment. At S371 to L379 the chain is on the cytoplasmic side. Residues P380 to I400 traverse the membrane as a helical segment. The Extracellular segment spans residues P401–D404. A helical membrane pass occupies residues L405–L425. Over L426–S437 the chain is Cytoplasmic. The helical transmembrane segment at P438–G458 threads the bilayer. Topologically, residues T459–R483 are extracellular.

The protein belongs to the amino acid/polyamine transporter 2 family. Abundantly expressed in kidney and muscle. Expressed in the S1 segment of the proximal tubule close to the glomerulus.

It localises to the cell membrane. It is found in the endoplasmic reticulum membrane. The protein resides in the recycling endosome membrane. The catalysed reaction is glycine(in) + H(+)(in) = glycine(out) + H(+)(out). It catalyses the reaction L-alanine(in) + H(+)(in) = L-alanine(out) + H(+)(out). The enzyme catalyses D-alanine(in) + H(+)(in) = D-alanine(out) + H(+)(out). It carries out the reaction L-proline(out) + H(+)(out) = L-proline(in) + H(+)(in). The catalysed reaction is D-proline(out) + H(+)(out) = D-proline(in) + H(+)(in). It catalyses the reaction 4-hydroxy-L-proline(in) + H(+)(in) = 4-hydroxy-L-proline(out) + H(+)(out). The enzyme catalyses L-serine(in) + H(+)(in) = L-serine(out) + H(+)(out). It carries out the reaction D-serine(out) + H(+)(out) = D-serine(in) + H(+)(in). The catalysed reaction is beta-alanine(in) + H(+)(in) = beta-alanine(out) + H(+)(out). It catalyses the reaction 4-aminobutanoate(in) + H(+)(in) = 4-aminobutanoate(out) + H(+)(out). The enzyme catalyses sarcosine(in) + H(+)(in) = sarcosine(out) + H(+)(out). It carries out the reaction N,N-dimethylglycine(in) + H(+)(in) = N,N-dimethylglycine(out) + H(+)(out). Electrogenic proton/amino acid symporter with a high selectivity for the small side chains amino acids glycine, alanine and proline, where both L- and D-enantiomers are transported. Extension of the backbone length, as in beta-alanine and 4-aminobutanoate or methylation of the amino group, as in sarcosine and N,N-dimethylglycine, are also tolerated but decrease transport efficiency. A free carboxyl group is preferred. The protein is Proton-coupled amino acid transporter 2 of Homo sapiens (Human).